A 510-amino-acid chain; its full sequence is RanBP-type and C3HC4-type zinc finger-containing protein 1 (510 aa).

Met1 is modified (N-acetylmethionine). Residues 1–220 (MDEKTKKAEE…PGCEMCCRAR (220 aa)) form an interaction with IRF3 region. The interval 1-270 (MDEKTKKAEE…NYLQHVQLDQ (270 aa)) is interaction with TAB2. Ser50 is modified (phosphoserine). Residues 55 to 119 (IRLWVSVEDA…DQETLHSHGV (65 aa)) form the Ubiquitin-like domain. The tract at residues 69–131 (VTIWLTVRPD…NGDSAYLYLL (63 aa)) is interaction with RNF31. Residues 160 to 192 (LTLQPRGPLEPGPPKPGVPQEPGRGQPDAVPEP) are disordered. Residues 167–178 (PLEPGPPKPGVP) are compositionally biased toward pro residues. The RanBP2-type zinc finger occupies 193–222 (PPVGWQCPGCTFINKPTRPGCEMCCRARPE). The stretch at 233–261 (DEEERARLAGEEEALRQYQQRKQQQQEGN) forms a coiled coil. The segment at 278-506 (EPAECPVCYS…VNGIPCHPSC (229 aa)) is TRIAD supradomain. Zn(2+)-binding residues include Cys282, Cys285, Cys300, His302, Cys305, Cys308, and Cys323. The RING-type 1 zinc-finger motif lies at 282-332 (CPVCYSVLAPGEAVVLRECLHTFCRECLQGTIRNSQEAEVSCPFIDNTYSC). Residue Tyr330 is modified to Phosphotyrosine. Positions 332, 371, 376, 391, 394, 399, 402, 406, 411, 447, and 450 each coordinate Zn(2+). The IBR-type zinc finger occupies 351–411 (QRFLDLGISI…CKAIHEQMNC (61 aa)). An RING-type 2; atypical zinc finger spans residues 447–476 (CPQCQIVVQKKDGCDWIRCTVCHTEICWVT). The active site involves Cys460. Residues Cys465 and Cys468 each coordinate Zn(2+).

The protein belongs to the RBR family. Component of the LUBAC complex (linear ubiquitin chain assembly complex) which consists of SHARPIN, RBCK1 and RNF31. LUBAC has a MW of approximately 600 kDa suggesting a heteromultimeric assembly of its subunits. Interacts with beta-I-type (PRKCB1) and zeta-type protein kinase C (PRKCZ). Interacts with UBE2L3. Interacts with PRKCH. Associates with the TNF-R1 signaling complex (TNF-RSC) in a stimulation-dependent manner. Interacts with EYA1, TAB2, TAB3, MAP3K7 TRAF6 and RIPK1. Interacts with IRF3. In terms of assembly, interacts with IREB2 only in iron-rich conditions. As to quaternary structure, (Microbial infection) Interacts with hepatitis B virus/HBV protein HBx; this interaction is required to activate transcription of the viral genome. Post-translationally, auto-ubiquitinated. Auto-ubiquitination leads to degradation by the proteasome. Phosphorylated. In vitro, phosphorylation inhibits auto-ubiquitination activity. In terms of processing, (Microbial infection) Ubiquitinated by S.flexneri E3 ubiquitin-protein ligases IpaH1.4 and IpaH2.5, leading to its degradation by the proteasome, thereby preventing formation of the bacterial ubiquitin coat and activation of innate immunity.

It catalyses the reaction [E2 ubiquitin-conjugating enzyme]-S-ubiquitinyl-L-cysteine + [acceptor protein]-L-lysine = [E2 ubiquitin-conjugating enzyme]-L-cysteine + [acceptor protein]-N(6)-ubiquitinyl-L-lysine.. It functions in the pathway protein modification; protein ubiquitination. In terms of biological role, E3 ubiquitin-protein ligase, which accepts ubiquitin from specific E2 ubiquitin-conjugating enzymes, such as UBE2L3/UBCM4, and then transfers it to substrates. Functions as an E3 ligase for oxidized IREB2 and both heme and oxygen are necessary for IREB2 ubiquitination. Promotes ubiquitination of TAB2 and IRF3 and their degradation by the proteasome. Component of the LUBAC complex which conjugates linear ('Met-1'-linked) polyubiquitin chains to substrates and plays a key role in NF-kappa-B activation and regulation of inflammation. LUBAC conjugates linear polyubiquitin to IKBKG and RIPK1 and is involved in activation of the canonical NF-kappa-B and the JNK signaling pathways. Linear ubiquitination mediated by the LUBAC complex interferes with TNF-induced cell death and thereby prevents inflammation. LUBAC is recruited to the TNF-R1 signaling complex (TNF-RSC) following polyubiquitination of TNF-RSC components by BIRC2 and/or BIRC3 and to conjugate linear polyubiquitin to IKBKG and possibly other components contributing to the stability of the complex. The LUBAC complex is also involved in innate immunity by conjugating linear polyubiquitin chains at the surface of bacteria invading the cytosol to form the ubiquitin coat surrounding bacteria. LUBAC is not able to initiate formation of the bacterial ubiquitin coat, and can only promote formation of linear polyubiquitins on pre-existing ubiquitin. The bacterial ubiquitin coat acts as an 'eat-me' signal for xenophagy and promotes NF-kappa-B activation. Together with OTULIN, the LUBAC complex regulates the canonical Wnt signaling during angiogenesis. Binds polyubiquitin of different linkage types. This Homo sapiens (Human) protein is RanBP-type and C3HC4-type zinc finger-containing protein 1 (RBCK1).